We begin with the raw amino-acid sequence, 438 residues long: MPCTCTWRNWRQWIRPLVAVIYLVSIVVAVPLCVWELQKLEVGIHTKAWFIAGIFLLLTIPISLWVILQHLVHYTQPELQKPIIRILWMVPIYSLDSWIALKYPGIAIYVDTCRECYEAYVIYNFMGFLTNYLTNRYPNLVLILEAKDQQKHFPPLCCCPPWAMGEVLLFRCKLGVLQYTVVRPFTTIVALICELLGIYDEGNFSFSNAWTYLVIINNMSQLFAMYCLLLFYKVLKEELSPIQPVGKFLCVKLVVFVSFWQAVVIALLVKVGVISEKHTWEWQTVEAVATGLQDFIICIEMFLAAIAHHYTFSYKPYVQEAEEGSCFDSFLAMWDVSDIRDDISEQVRRVGRTVRGHPRKKLFPEDQDQNEHTSLLSSSSQDAISIASSMPPSPMGHYQGFGHTVTPQTTPTTAKISDEILSDTIGEKKEPSDKSVDS.

The next 7 membrane-spanning stretches (helical) occupy residues leucine 17–leucine 37, alanine 48–leucine 68, isoleucine 86–isoleucine 106, tyrosine 179–tyrosine 199, tyrosine 212–tyrosine 232, valine 254–isoleucine 274, and alanine 287–alanine 307. The interval proline 358–serine 438 is disordered. Composition is skewed to low complexity over residues serine 374–methionine 390 and threonine 404–threonine 413. Serine 422 is modified (phosphoserine). A compositionally biased stretch (basic and acidic residues) spans isoleucine 425–serine 438.

The protein belongs to the TMEM184 family.

The protein localises to the membrane. In terms of biological role, possible tumor suppressor which may play a role in cell growth. In Pongo abelii (Sumatran orangutan), this protein is Transmembrane protein 184C (TMEM184C).